Here is a 78-residue protein sequence, read N- to C-terminus: Small ribosomal subunit protein uS15c (78 aa).

Belongs to the universal ribosomal protein uS15 family. In terms of assembly, part of the 30S ribosomal subunit.

It localises to the plastid. It is found in the chloroplast. This Saccharum officinarum (Sugarcane) protein is Small ribosomal subunit protein uS15c (rps15-A).